A 300-amino-acid chain; its full sequence is F-box/LRR-repeat protein 15 (300 aa).

Met-1 is subject to N-acetylmethionine. One can recognise an F-box domain in the interval 19–66 (LLDLPWEDVLLPHILSRVPLRQLLRLQRVSRAFRALVQLHLAGLRRFD). The interval 113–269 (NPQLRSVALA…EPSLSRLRKR (157 aa)) is interaction with SMURF1. LRR repeat units lie at residues 141 to 162 (RLQR…RGLA), 167 to 188 (ALEE…VYLA), 194 to 215 (GLRS…QELA), 220 to 241 (ELEH…RTLA), and 246 to 267 (ALRS…SRLR).

The protein belongs to the FBXL15 family. Part of the SCF (SKP1-CUL1-F-box) E3 ubiquitin-protein ligase complex SCF(FBXL15) composed of CUL1, SKP1, RBX1 and FBXL15.

It localises to the cytoplasm. Its pathway is protein modification; protein ubiquitination. Substrate recognition component of a SCF (SKP1-CUL1-F-box protein) E3 ubiquitin-protein ligase complex which mediates the ubiquitination and subsequent proteasomal degradation of SMURF1, thereby acting as a positive regulator of the BMP signaling pathway. Required for dorsal/ventral pattern formation and bone mass maintenance. Also mediates ubiquitination of SMURF2 and WWP2. This is F-box/LRR-repeat protein 15 (FBXL15) from Canis lupus familiaris (Dog).